Reading from the N-terminus, the 187-residue chain is MNYKAAIEAILFTMGESVELGRIADAIQLNEKETKKLLDELIKEYRSSSNIGMNIIELDGAYQMCTKPQMYEYLIRIAKQPKKRVLTDVLLETLSIIAYKQPVTKAEIEKIRGVSSEHAVSKLVEYNLVQELGRLDAPGRPLLFGTTEEFLRSFGVSSIDELPVLSPVQVEEFKQEAEEEMHVKLDV.

Belongs to the ScpB family. As to quaternary structure, homodimer. Homodimerization may be required to stabilize the binding of ScpA to the Smc head domains. Component of a cohesin-like complex composed of ScpA, ScpB and the Smc homodimer, in which ScpA and ScpB bind to the head domain of Smc. The presence of the three proteins is required for the association of the complex with DNA.

Its subcellular location is the cytoplasm. In terms of biological role, participates in chromosomal partition during cell division. May act via the formation of a condensin-like complex containing Smc and ScpA that pull DNA away from mid-cell into both cell halves. This is Segregation and condensation protein B from Agathobacter rectalis (strain ATCC 33656 / DSM 3377 / JCM 17463 / KCTC 5835 / VPI 0990) (Eubacterium rectale).